Reading from the N-terminus, the 349-residue chain is uncharacterized protein (349 aa).

The N-terminal stretch at 1–29 (MKQKYENYFKKRLILNLLIFLLLACSSES) is a signal peptide.

This is an uncharacterized protein from Borreliella burgdorferi (strain ATCC 35210 / DSM 4680 / CIP 102532 / B31) (Borrelia burgdorferi).